The primary structure comprises 249 residues: Hydroxyacylglutathione hydrolase (249 aa).

His-54, His-56, Asp-58, His-59, His-113, Asp-138, and His-176 together coordinate Zn(2+).

This sequence belongs to the metallo-beta-lactamase superfamily. Glyoxalase II family. Monomer. Requires Zn(2+) as cofactor.

The catalysed reaction is an S-(2-hydroxyacyl)glutathione + H2O = a 2-hydroxy carboxylate + glutathione + H(+). The protein operates within secondary metabolite metabolism; methylglyoxal degradation; (R)-lactate from methylglyoxal: step 2/2. In terms of biological role, thiolesterase that catalyzes the hydrolysis of S-D-lactoyl-glutathione to form glutathione and D-lactic acid. The chain is Hydroxyacylglutathione hydrolase from Parasynechococcus marenigrum (strain WH8102).